A 281-amino-acid polypeptide reads, in one-letter code: Succinate dehydrogenase [ubiquinone] iron-sulfur subunit 1, mitochondrial (281 aa).

Residues 1–25 constitute a mitochondrion transit peptide; the sequence is MAAAALLRRSPAARALLSPALSSRL. The tract at residues 26 to 48 is disordered; the sequence is VASKPHSSSPAPPPPPSKAGANT. Residues 49-141 form the 2Fe-2S ferredoxin-type domain; that stretch reads KTFSIYRWDP…ASTISPLPHM (93 aa). Residues Cys102, Cys107, and Cys122 each contribute to the [2Fe-2S] cluster site. The 4Fe-4S ferredoxin-type domain occupies 184–214; sequence DRAKLDGMYECILCACCSTSCPSYWWNPEEY. Residues Cys194, Cys197, and Cys200 each coordinate [4Fe-4S] cluster. [3Fe-4S] cluster is bound at residue Cys204. Residue Trp209 participates in a ubiquinone binding. Residues Cys251 and Cys257 each coordinate [3Fe-4S] cluster. Cys261 serves as a coordination point for [4Fe-4S] cluster.

It belongs to the succinate dehydrogenase/fumarate reductase iron-sulfur protein family. Component of complex II composed of eight subunits in plants: four classical SDH subunits SDH1, SDH2, SDH3 and SDH4 (a flavoprotein (FP), an iron-sulfur protein (IP), and a cytochrome b composed of a large and a small subunit.), as well as four subunits unknown in mitochondria from bacteria and heterotrophic eukaryotes. It depends on [2Fe-2S] cluster as a cofactor. [3Fe-4S] cluster is required as a cofactor. The cofactor is [4Fe-4S] cluster.

It localises to the mitochondrion inner membrane. It carries out the reaction a quinone + succinate = fumarate + a quinol. It participates in carbohydrate metabolism; tricarboxylic acid cycle; fumarate from succinate (eukaryal route): step 1/1. In terms of biological role, iron-sulfur protein (IP) subunit of succinate dehydrogenase (SDH) that is involved in complex II of the mitochondrial electron transport chain and is responsible for transferring electrons from succinate to ubiquinone (coenzyme Q). The protein is Succinate dehydrogenase [ubiquinone] iron-sulfur subunit 1, mitochondrial of Oryza sativa subsp. japonica (Rice).